The sequence spans 70 residues: MPGIKVREGDAFDEAYRRFKKQTDRNLVVTECRARRFFESKTEKRKKQKISAKKEVLKRLYMLRRYESRL.

It belongs to the bacterial ribosomal protein bS21 family.

This Helicobacter pylori (strain J99 / ATCC 700824) (Campylobacter pylori J99) protein is Small ribosomal subunit protein bS21 (rpsU).